A 164-amino-acid chain; its full sequence is MANPLRKTMVYLGLADEELDYQQGQQPAQQQQSPVQAVPTPAPAPQQQAKRAPVTPLHKPSTTTRNAAPAEMNEILTVHPKAYKDAQVIAENFREGVPVIINLSQMTDDDARRLIDFASGLSIGLYGKIERVTAKVFLLSPSHVAVSGEQSATEAEVEASFFGR.

The segment at 21-71 (YQQGQQPAQQQQSPVQAVPTPAPAPQQQAKRAPVTPLHKPSTTTRNAAPAE) is disordered. The span at 22–54 (QQGQQPAQQQQSPVQAVPTPAPAPQQQAKRAPV) shows a compositional bias: low complexity.

Belongs to the SepF family. In terms of assembly, homodimer. Interacts with FtsZ.

The protein resides in the cytoplasm. Cell division protein that is part of the divisome complex and is recruited early to the Z-ring. Probably stimulates Z-ring formation, perhaps through the cross-linking of FtsZ protofilaments. Its function overlaps with FtsA. The polypeptide is Cell division protein SepF (Clavibacter michiganensis subsp. michiganensis (strain NCPPB 382)).